The primary structure comprises 404 residues: Acetate kinase (404 aa).

Asn7 contacts Mg(2+). Lys14 is a binding site for ATP. Arg95 is a binding site for substrate. The active-site Proton donor/acceptor is the Asp152. ATP contacts are provided by residues 212–216 (HLGNG), 286–288 (DMR), and 334–338 (GIGEN). A Mg(2+)-binding site is contributed by Glu388.

Belongs to the acetokinase family. Homodimer. It depends on Mg(2+) as a cofactor. Requires Mn(2+) as cofactor.

It is found in the cytoplasm. It carries out the reaction acetate + ATP = acetyl phosphate + ADP. It functions in the pathway metabolic intermediate biosynthesis; acetyl-CoA biosynthesis; acetyl-CoA from acetate: step 1/2. In terms of biological role, catalyzes the formation of acetyl phosphate from acetate and ATP. Can also catalyze the reverse reaction. The protein is Acetate kinase of Nitratidesulfovibrio vulgaris (strain DSM 19637 / Miyazaki F) (Desulfovibrio vulgaris).